The primary structure comprises 790 residues: MELSEGELSHTSSSSSFVPVDQRQLQDAIQIIDEDKHFNTGILDYINKTSPADVGNNYHIISVFGSQSTGKSTLLNRLFNTNFDVMDESNRQQTTKGIWLAYSPVVSTTSGHTTSKSNILVMDVEGTDGRERGEDQDFERKAALFALSTSEILIINIWETQVGLYQGANMGLLKTVFEVNLSLFGKSKLEKHNEHKVLLLIVIRDHVGVTPVESLAKTFTSDLQNMWGSLSKPAELEHLRFADFFDVSFHALNHKVLQPKEFGEGINKLGDRLVVNNELFKPEYHHDVPIDGWTMYAERCWEQIETNKDLDLPTQQILVAQFKCDEIVEGVFQEFLSKYQHHFKEVDVDVDFAELGELFVDLRSDSLEDYDVSASRYNKAVYEQKRAKLRGLINDKLKEVFDVHAKKLCDTLLETFQKDLVALKGKDFAVNVKALSTKLVEQVVDTLSLMSLHGDISSNEITSGLSKEIDATIAKQQVIELNSIVNKSVKKLSGSLSKSIQFELGDPNDETWDNVLQMFKESYDKFGGDFGLGTSTTQNEQAIERFKFKSWCQFYDVTRKLISKEKLLALLQDRFDDKFRYDENGLPKLYLNEQDLEKTFAVAKQYALQVLPILTLAKLADGSEIVPEYDIFDSKLREEFLGAYDDSDDEDDHCFAEVVTEQEKSEVLAKFKKEVDAKYIETKRSIVQHITQIPYYIYLIILVLGWNEFMAIIRNPLFFSLSIVLGATVYVLYYLNLLKPAMLVAQRTMDEVIIMAKTKLREVLIDDHEVTGRQLNKIAGGKENIELDDM.

The Cytoplasmic portion of the chain corresponds to 1-692 (MELSEGELSH…KRSIVQHITQ (692 aa)). Positions 55 to 284 (GNNYHIISVF…VNNELFKPEY (230 aa)) constitute a GB1/RHD3-type G domain. Position 65–72 (65–72 (GSQSTGKS)) interacts with GTP. Residues 693-713 (IPYYIYLIILVLGWNEFMAII) form a helical membrane-spanning segment. At 714 to 716 (RNP) the chain is on the lumenal side. A helical membrane pass occupies residues 717–737 (LFFSLSIVLGATVYVLYYLNL). At 738-790 (LKPAMLVAQRTMDEVIIMAKTKLREVLIDDHEVTGRQLNKIAGGKENIELDDM) the chain is on the cytoplasmic side.

It belongs to the TRAFAC class dynamin-like GTPase superfamily. GB1/RHD3 GTPase family. RHD3 subfamily.

It is found in the endoplasmic reticulum membrane. In terms of biological role, cooperates with the reticulon proteins and tubule-shaping DP1 family proteins to generate and maintain the structure of the tubular endoplasmic reticulum network. Has GTPase activity, which is required for its function in ER organization. This is Protein SEY1 from Candida dubliniensis (strain CD36 / ATCC MYA-646 / CBS 7987 / NCPF 3949 / NRRL Y-17841) (Yeast).